The primary structure comprises 298 residues: tRNA(Met) cytidine acetate ligase (298 aa).

ATP contacts are provided by residues 6 to 19, G100, N157, and R182; that span reads IAEY…HIYQ.

Belongs to the TmcAL family.

The protein resides in the cytoplasm. The enzyme catalyses cytidine(34) in elongator tRNA(Met) + acetate + ATP = N(4)-acetylcytidine(34) in elongator tRNA(Met) + AMP + diphosphate. Functionally, catalyzes the formation of N(4)-acetylcytidine (ac(4)C) at the wobble position of elongator tRNA(Met), using acetate and ATP as substrates. First activates an acetate ion to form acetyladenylate (Ac-AMP) and then transfers the acetyl group to tRNA to form ac(4)C34. The protein is tRNA(Met) cytidine acetate ligase of Mycoplasmopsis pulmonis (strain UAB CTIP) (Mycoplasma pulmonis).